Here is a 286-residue protein sequence, read N- to C-terminus: Transcription factor bHLH11 (286 aa).

The tract at residues 1-34 (MDQPMKPKTCSESDFADDSSASSSSSSGQNLRGA) is disordered. Residues 18 to 27 (DSSASSSSSS) show a composition bias toward low complexity. Positions 44–94 (AVCSQKAEREKLRRDKLKEQFLELGNALDPNRPKSDKASVLTDTIQMLKDV) constitute a bHLH domain. Disordered stretches follow at residues 182–202 (EQQASVQQHSSSSADASMKQD) and 244–286 (QQDV…MLKP). 2 stretches are compositionally biased toward low complexity: residues 183–198 (QQASVQQHSSSSADAS) and 255–269 (SLTTTASSSNSYSLS). A compositionally biased stretch (polar residues) spans 270-279 (QAVQDSSPGT).

In terms of assembly, homodimer. In terms of tissue distribution, expressed consitutively in roots, leaves, stems, and flowers.

It localises to the nucleus. This is Transcription factor bHLH11 (BHLH11) from Arabidopsis thaliana (Mouse-ear cress).